Here is a 648-residue protein sequence, read N- to C-terminus: Macrolide export ATP-binding/permease protein MacB (648 aa).

One can recognise an ABC transporter domain in the interval 6–251 (IRVRGVSRAF…GPSAGWRGAI (246 aa)). 42–49 (GASGSGKS) contacts ATP. The next 4 membrane-spanning stretches (helical) occupy residues 273 to 293 (LLTM…SALG), 528 to 548 (VAVI…LVSV), 572 to 592 (FLIE…MLAL), and 613 to 633 (SIIV…FLPA).

It belongs to the ABC transporter superfamily. Macrolide exporter (TC 3.A.1.122) family. In terms of assembly, homodimer.

It localises to the cell inner membrane. Functionally, non-canonical ABC transporter that contains transmembrane domains (TMD), which form a pore in the inner membrane, and an ATP-binding domain (NBD), which is responsible for energy generation. Confers resistance against macrolides. The chain is Macrolide export ATP-binding/permease protein MacB from Agrobacterium fabrum (strain C58 / ATCC 33970) (Agrobacterium tumefaciens (strain C58)).